We begin with the raw amino-acid sequence, 390 residues long: Alkanesulfonate monooxygenase (390 aa).

Belongs to the SsuD family.

It carries out the reaction an alkanesulfonate + FMNH2 + O2 = an aldehyde + FMN + sulfite + H2O + 2 H(+). Functionally, catalyzes the desulfonation of aliphatic sulfonates. The polypeptide is Alkanesulfonate monooxygenase (Cupriavidus taiwanensis (strain DSM 17343 / BCRC 17206 / CCUG 44338 / CIP 107171 / LMG 19424 / R1) (Ralstonia taiwanensis (strain LMG 19424))).